Consider the following 687-residue polypeptide: Pre-mRNA-splicing factor CLF1 (687 aa).

13 HAT repeats span residues 45-77 (EYQR…FEIE), 79-111 (HDMR…AELK), 113-145 (KCIN…VEES), 147-178 (NNVE…FEIR), 180-211 (KNWN…FENR), 213-247 (GNTE…AKLV), 251-283 (AHWE…LKAG), 300-332 (TISY…LISE), 337-369 (QIMQ…LWMR), 383-416 (LEEE…FLIR), 451-483 (KEFD…LEEN), 525-557 (QEFE…YQTS), and 629-661 (LDQE…YIFP).

This sequence belongs to the crooked-neck family. Belongs to the NTC complex (or PRP19-associated complex), composed of at least CEF1, CLF1, ISY1, NTC20, SNT309, SYF1, SYF2, and PRP19. The NTC complex associates with the spliceosome after the release of the U1 and U4 snRNAs and forms the CWC spliceosome subcomplex (or CEF1-associated complex) reminiscent of a late-stage spliceosome composed also of the U2, U5 and U6 snRNAs and at least BUD13, BUD31, BRR2, CDC40, CUS1, CWC2, CWC15, CWC21, CWC22, CWC23, CWC24, CWC25, CWC27, ECM2, HSH155, IST3, LEA1, MSL1, PRP8, PRP9, PRP11, PRP21, PRP22, PRP45, PRP46, SLU7, SMB1, SMD1, SMD2, SMD3, SMX2, SMX3, SNU114, SPP2, RSE1 and YJU2. Interacts with CEF1, ISY1, MUD2, NTC20, PRP22, PRP40, PRP46, SYF1, SYF2, and the ORC2 subunit of the origin recognition complex.

Its subcellular location is the nucleus. In terms of biological role, involved in pre-mRNA splicing and cell cycle progression. Required for the spliceosome assembly by promoting the functional integration of the U4/U6.U5 tri-snRNP particle into the U1-, U2-dependent pre-spliceosome. Also recruits PRP19 to the spliceosome, as a component of the NTC complex (or PRP19-associated complex). The association of the NTC complex to the spliceosome mediates conformational rearrangement or stabilizes the structure of the spliceosome after U4 snRNA dissociation, which leads to spliceosome maturation. Required for initiation of the DNA replication by binding the RNA replication origins, probably through its interaction with the origin recognition complex (ORC). The sequence is that of Pre-mRNA-splicing factor CLF1 (CLF1) from Saccharomyces cerevisiae (strain ATCC 204508 / S288c) (Baker's yeast).